Here is a 224-residue protein sequence, read N- to C-terminus: Endonuclease NucS (224 aa).

This sequence belongs to the NucS endonuclease family.

The protein localises to the cytoplasm. Functionally, cleaves both 3' and 5' ssDNA extremities of branched DNA structures. In Rhodococcus erythropolis (strain PR4 / NBRC 100887), this protein is Endonuclease NucS.